Reading from the N-terminus, the 446-residue chain is 5-methylthioadenosine/S-adenosylhomocysteine deaminase (446 aa).

Zn(2+) is bound by residues His72 and His74. The substrate site is built by Glu101 and His194. His221 contributes to the Zn(2+) binding site. Residues Glu224 and Asp309 each contribute to the substrate site. Position 309 (Asp309) interacts with Zn(2+).

Belongs to the metallo-dependent hydrolases superfamily. MTA/SAH deaminase family. Requires Zn(2+) as cofactor.

The catalysed reaction is S-adenosyl-L-homocysteine + H2O + H(+) = S-inosyl-L-homocysteine + NH4(+). It catalyses the reaction S-methyl-5'-thioadenosine + H2O + H(+) = S-methyl-5'-thioinosine + NH4(+). Functionally, catalyzes the deamination of 5-methylthioadenosine and S-adenosyl-L-homocysteine into 5-methylthioinosine and S-inosyl-L-homocysteine, respectively. Is also able to deaminate adenosine. The chain is 5-methylthioadenosine/S-adenosylhomocysteine deaminase from Saccharophagus degradans (strain 2-40 / ATCC 43961 / DSM 17024).